The primary structure comprises 1342 residues: MVYSYTEKKRIRKDFGKRPQVLDIPYLLSIQLDSFQKFIEQDPEGQHGLEAAFRSVFPIQSYSGNSELQYVSYRLGEPVFDVKECQIRGVTYSAPLRVKLRLVIYEREAPEGTVKDIKEQEVYMGEIPLMTENGTFVINGTERVIVSQLHRSPGVFFDSDKGKTHSSGKVLYNARIIPYRGPWLDFEFDPKDNLFVRIDRRRKLPATIILRALNFTTAQILDLFFEKVVFEIRDNKLQMELVPERLRGETASFDIEANGKVYVEKARRITARHIRQLEKDGIDRIEVPVEYIAGKVVAKDYVDASTGELICAANMELSLDLLAKLSQAGHKQIETLFTNDLDHGAYISETLRVDPTSDRLSALVEIYRMMRPGEPPTREAAENLFENLFFSEDRYDLSAVGRMKFNRSLLRDEIEGSGILSKEDITEVMKKLIDIRNGRGEVDDIDHLGNRRIRSVGEMAENQFRVGLVRVERAVKERLSLGDLDTLMPQDMINAKPISAAVKEFFGSSQLSQFMDQNNPLSEITHKRRISALGPGGLTRERAGFEVRDVHPTHYGRVCPIETPEGPNIGLINSLSVYAQTNEYGFLETPYRRVRDGVVTDEINYLSAIEEGNFVIAQANSNLDDEGRFLEDLVTCRSKGESSLFSREQVDYMDVSTQQIVSVGASLIPFLEHDDANRALMGANMQRQAVPTLRADKPLVGTGMERAVAVDSGVTSVAKRGGTVQYVDASRIVIKVNEDEMHPGEAGIDIYNLTKYTRSNQNTCINQMPCVNLGEPIERGDVLADGPSTDLGELALGQNMRVAFMPWNGYNFEDSILVSERVVQEDRFTTIHIQELACVSRDTKLGPEEITADIPNVGEAALSKLDESGIVYIGAEVTGGDILVGKVTPKGETQLTPEEKLLRAIFGEKASDVKDSSLRVPNGVSGTVIDVQVFTRDGVEKDKRALEIEEMQLKQAKKDLTEELQILEAGLFARIHAVLVSGGIEAEKLSKLPRERWLELGLTDEDKQNQLEQLAEQYDEMKSEFEKKMDAKRRKITQGDDLAPGVLKIVKVYLAVKRQIQPGDKMAGRHGNKGVISKINPIEDMPYDENGTPVDIVLNPLGVPSRMNIGQILETHLGMAAKGIGEKINAMLKKQEEVAKLREFIQKAYDLGDNVCQKVDLSTFTDDEVLRLAENLKKGMPIATPVFDGATEKEIKELLQLGGLPTSGQITLFDGRTGEQFERQVTVGYMYMLKLNHLVDDKMHARSTGSYSLVTQQPLGGKAQFGGQRFGEMEVWALEAYGAAYTLQEMLTVKSDDVNGRTKMYKNIVDGDHRMEPGMPESFNVLLKEIRSLGINIELEEE.

It belongs to the RNA polymerase beta chain family. As to quaternary structure, the RNAP catalytic core consists of 2 alpha, 1 beta, 1 beta' and 1 omega subunit. When a sigma factor is associated with the core the holoenzyme is formed, which can initiate transcription.

It carries out the reaction RNA(n) + a ribonucleoside 5'-triphosphate = RNA(n+1) + diphosphate. DNA-dependent RNA polymerase catalyzes the transcription of DNA into RNA using the four ribonucleoside triphosphates as substrates. The sequence is that of DNA-directed RNA polymerase subunit beta from Yersinia pestis bv. Antiqua (strain Angola).